Reading from the N-terminus, the 553-residue chain is Putative transport protein YidE (553 aa).

The next 5 helical transmembrane spans lie at 4–24 (IALTVSILALVAVVGLFIGNV), 28–48 (GIGLGIGGVLFGGIIVGHFVS), 65–85 (FGLILFVYTIGIQVGPGFFAS), 95–115 (LFAVLIVIIGGLVTAILHKLF), and 158–178 (MSYAMAYPFGICGILFTMWML). RCK C-terminal domains lie at 191–276 (QQHE…VIGQ) and 279–361 (DTSL…VLGN). 6 helical membrane passes run 371–391 (MLPVFIGIGLGVLLGSIPVFV), 393–413 (GFPAALKLGLAGGPLIMALIL), 439–459 (IVLFLSVVGLKSGGDFVNTLV), 464–484 (LSWIGYGALITAVPLITVGIL), 493–513 (YLTMCGMLAGSMTDPPALAFA), and 533–553 (LVMFLRIITPQLLAVLFWSIG).

This sequence belongs to the AAE transporter (TC 2.A.81) family. YidE subfamily.

The protein localises to the cell membrane. This is Putative transport protein YidE from Escherichia coli O7:K1 (strain IAI39 / ExPEC).